Here is a 164-residue protein sequence, read N- to C-terminus: UPF0251 protein MM_1448 (164 aa).

Positions 91–100 are enriched in basic and acidic residues; that stretch reads GDYRMPRGDR. Residues 91–123 form a disordered region; it reads GDYRMPRGDRTGPAGQGPAGGGRGRGQGKGRGG. A compositionally biased stretch (gly residues) spans 104 to 115; it reads AGQGPAGGGRGR.

The protein belongs to the UPF0251 family.

This is UPF0251 protein MM_1448 from Methanosarcina mazei (strain ATCC BAA-159 / DSM 3647 / Goe1 / Go1 / JCM 11833 / OCM 88) (Methanosarcina frisia).